A 393-amino-acid polypeptide reads, in one-letter code: Probable alpha-1,6-mannosyltransferase MNN10 (393 aa).

The Cytoplasmic portion of the chain corresponds to 1 to 52 (MSSVPYNSQLPISNHLEYDEDEKKSRGSKLGLKYKMIYWRKTLCSSLARWRK). The helical; Signal-anchor for type II membrane protein transmembrane segment at 53-73 (LILLISLALFLFIWISDSTIS) threads the bilayer. Residues 74-393 (RNPSTTSFQG…RKWYTRFFFP (320 aa)) lie on the Lumenal side of the membrane. The interval 77 to 97 (STTSFQGQNSNDNKLSNTGSS) is disordered.

It belongs to the glycosyltransferase 34 family. Component of the M-Pol II complex composed of ANP1, MNN9, MNN10, MNN11 and HOC1.

Its subcellular location is the endoplasmic reticulum membrane. The protein resides in the golgi apparatus. It localises to the cis-Golgi network membrane. Required for polarized growth and efficient budding. Functionally, the M-Pol II complex possesses alpha-1,6-mannosyltransferase activity and is probably involved in the elongation of the mannan backbone of N-linked glycans on cell wall and periplasmic proteins. The chain is Probable alpha-1,6-mannosyltransferase MNN10 (MNN10) from Saccharomyces cerevisiae (strain ATCC 204508 / S288c) (Baker's yeast).